Consider the following 553-residue polypeptide: Methionine--tRNA ligase (553 aa).

The short motif at 12 to 22 is the 'HIGH' region element; it reads PYANSQLHLGH. Cys144, Cys147, Cys157, and Cys160 together coordinate Zn(2+). Residues 332–336 carry the 'KMSKS' region motif; sequence KFSKS. Lys335 contributes to the ATP binding site.

Belongs to the class-I aminoacyl-tRNA synthetase family. MetG type 1 subfamily. Monomer. The cofactor is Zn(2+).

Its subcellular location is the cytoplasm. The enzyme catalyses tRNA(Met) + L-methionine + ATP = L-methionyl-tRNA(Met) + AMP + diphosphate. Its function is as follows. Is required not only for elongation of protein synthesis but also for the initiation of all mRNA translation through initiator tRNA(fMet) aminoacylation. This is Methionine--tRNA ligase from Dehalococcoides mccartyi (strain ATCC BAA-2266 / KCTC 15142 / 195) (Dehalococcoides ethenogenes (strain 195)).